An 83-amino-acid polypeptide reads, in one-letter code: Large ribosomal subunit protein bL27 (83 aa).

Belongs to the bacterial ribosomal protein bL27 family.

This is Large ribosomal subunit protein bL27 from Treponema denticola (strain ATCC 35405 / DSM 14222 / CIP 103919 / JCM 8153 / KCTC 15104).